Here is a 201-residue protein sequence, read N- to C-terminus: Small ribosomal subunit protein uS4c (201 aa).

The tract at residues proline 19–serine 38 is disordered. An S4 RNA-binding domain is found at methionine 89–glutamine 149.

Belongs to the universal ribosomal protein uS4 family. As to quaternary structure, part of the 30S ribosomal subunit. Contacts protein S5. The interaction surface between S4 and S5 is involved in control of translational fidelity.

The protein localises to the plastid. The protein resides in the chloroplast. Functionally, one of the primary rRNA binding proteins, it binds directly to 16S rRNA where it nucleates assembly of the body of the 30S subunit. Its function is as follows. With S5 and S12 plays an important role in translational accuracy. This Platanus occidentalis (Sycamore) protein is Small ribosomal subunit protein uS4c (rps4).